The primary structure comprises 103 residues: Large ribosomal subunit protein uL24 (103 aa).

This sequence belongs to the universal ribosomal protein uL24 family. In terms of assembly, part of the 50S ribosomal subunit.

Functionally, one of two assembly initiator proteins, it binds directly to the 5'-end of the 23S rRNA, where it nucleates assembly of the 50S subunit. In terms of biological role, one of the proteins that surrounds the polypeptide exit tunnel on the outside of the subunit. This chain is Large ribosomal subunit protein uL24, found in Ruthia magnifica subsp. Calyptogena magnifica.